Consider the following 354-residue polypeptide: Methionine import ATP-binding protein MetN (354 aa).

In terms of domain architecture, ABC transporter spans 8 to 250 (LDHIDITFRQ…PKEALTQEFI (243 aa)). 42 to 49 (GYSGAGKS) is a binding site for ATP.

It belongs to the ABC transporter superfamily. Methionine importer (TC 3.A.1.24) family. The complex is composed of two ATP-binding proteins (MetN), two transmembrane proteins (MetI) and a solute-binding protein (MetQ).

It is found in the cell membrane. It catalyses the reaction L-methionine(out) + ATP + H2O = L-methionine(in) + ADP + phosphate + H(+). The enzyme catalyses D-methionine(out) + ATP + H2O = D-methionine(in) + ADP + phosphate + H(+). Functionally, part of the ABC transporter complex MetNIQ involved in methionine import. Responsible for energy coupling to the transport system. The protein is Methionine import ATP-binding protein MetN of Streptococcus pyogenes serotype M12 (strain MGAS2096).